Consider the following 306-residue polypeptide: Protein STPG3 (306 aa).

The interval 210–230 (CSYTPLLPTSKPSGEKRPSPN) is disordered.

The protein is Protein STPG3 of Mus musculus (Mouse).